A 124-amino-acid polypeptide reads, in one-letter code: Ribosome-binding factor A (124 aa).

The protein belongs to the RbfA family. Monomer. Binds 30S ribosomal subunits, but not 50S ribosomal subunits or 70S ribosomes.

The protein resides in the cytoplasm. Its function is as follows. One of several proteins that assist in the late maturation steps of the functional core of the 30S ribosomal subunit. Associates with free 30S ribosomal subunits (but not with 30S subunits that are part of 70S ribosomes or polysomes). Required for efficient processing of 16S rRNA. May interact with the 5'-terminal helix region of 16S rRNA. The sequence is that of Ribosome-binding factor A from Sorangium cellulosum (strain So ce56) (Polyangium cellulosum (strain So ce56)).